The following is a 1188-amino-acid chain: Meiotically up-regulated gene 190 protein (1188 aa).

The span at 1–11 (MSTHSGDSTKQ) shows a compositional bias: polar residues. Disordered stretches follow at residues 1-61 (MSTH…DPIT) and 83-125 (FTVP…EADN). The segment covering 41–61 (EKKEEQQREQTENEKLFDPIT) has biased composition (basic and acidic residues). Over residues 84–112 (TVPNQSIQGSSLPSEKPYLSSNQPTNVYK) the composition is skewed to polar residues. The helical transmembrane segment at 173-193 (LVISWFFTHSIIISAVLPLAI) threads the bilayer. The SMP-LTD domain occupies 228–453 (IPESAEWMNH…SPKSMTIDLS (226 aa)). The interval 298–318 (ASESFSEKQASEAEHKDEPEQ) is disordered. The segment covering 302-318 (FSEKQASEAEHKDEPEQ) has biased composition (basic and acidic residues). C2 domains follow at residues 451–576 (DLSK…ERCD) and 636–781 (KEEE…TKWY). Asp-485, Asp-491, Asp-544, Asp-546, Ser-549, and Asp-552 together coordinate Ca(2+). 2 disordered regions span residues 615–639 (TIPR…KEEE) and 1002–1066 (QRAS…GTMN). Ser-1005 carries the phosphoserine modification. Residues 1022-1032 (DDSVDTEDEET) show a composition bias toward acidic residues.

Ca(2+) is required as a cofactor.

Its subcellular location is the cytoplasm. The protein localises to the endoplasmic reticulum membrane. It is found in the nucleus membrane. It localises to the cytoskeleton. The protein resides in the microtubule organizing center. Its subcellular location is the spindle pole body. In terms of biological role, has a role in meiosis. This is Meiotically up-regulated gene 190 protein (mug190) from Schizosaccharomyces pombe (strain 972 / ATCC 24843) (Fission yeast).